The chain runs to 724 residues: Putative methyltransferase NSUN7 (724 aa).

Catalysis depends on cysteine 444, which acts as the Nucleophile. 3 disordered regions span residues 542–574 (KTLK…LAVD), 595–629 (ISTS…TPLV), and 698–724 (TSST…RPWL). The span at 543-554 (TLKRDKKRKKSK) shows a compositional bias: basic residues. A compositionally biased stretch (basic and acidic residues) spans 562–572 (HHGDPLRDHLA). Residues 595–618 (ISTSTKMSAPAKTVSQAGTSSQVR) are compositionally biased toward polar residues.

It belongs to the class I-like SAM-binding methyltransferase superfamily. RsmB/NOP family. Expressed in testis.

In terms of biological role, may have S-adenosyl-L-methionine-dependent methyl-transferase activity. In Mus musculus (Mouse), this protein is Putative methyltransferase NSUN7 (Nsun7).